A 418-amino-acid polypeptide reads, in one-letter code: MSGTFNDIRRRKKEEGSPTAGITERHENKSLSSIDKREQTLKPQLESCCPLATPFERRLQTLAVAWHTSSFVLFSIFTLFAISTPALWVLAIPYMIYFFFDRSPATGEVVNRYSLRFRSLPIWKWYCDYFPISLIKTVNLKPTFTLSKNKRVNEKNYKIRLWPTKYSINLKSNSTIDYRNQECTGPTYLFGYHPHGIGALGAFGAFATEGCNYSKIFPGIPISLMTLVTQFHIPLYRDYLLALGISSVSRKNALRTLSKNQSICIVVGGARESLLSSTNGTQLILNKRKGFIKLAIQTGNINLVPVFAFGEVDCYNVLSTKKDSVLGKMQLWFKENFGFTIPIFYARGLFNYDFGLLPFRAPINVVVGRPIYVEKKITNPPDDVVNHFHDLYIAELKRLYYENREKYGVPDAELKIVG.

The disordered stretch occupies residues 1–30 (MSGTFNDIRRRKKEEGSPTAGITERHENKS). Over 1–71 (MSGTFNDIRR…LAVAWHTSSF (71 aa)) the chain is Cytoplasmic. A Phosphoserine modification is found at S17. The chain crosses the membrane as a helical span at residues 72–92 (VLFSIFTLFAISTPALWVLAI). The Lumenal portion of the chain corresponds to 93–186 (PYMIYFFFDR…DYRNQECTGP (94 aa)). N-linked (GlcNAc...) asparagine glycosylation occurs at N173. The chain crosses the membrane as a helical span at residues 187 to 207 (TYLFGYHPHGIGALGAFGAFA). The Cytoplasmic segment spans residues 208–215 (TEGCNYSK). The chain crosses the membrane as a helical span at residues 216 to 236 (IFPGIPISLMTLVTQFHIPLY). Over 237-289 (RDYLLALGISSVSRKNALRTLSKNQSICIVVGGARESLLSSTNGTQLILNKRK) the chain is Lumenal. N-linked (GlcNAc...) asparagine glycans are attached at residues N260 and N279. A helical membrane pass occupies residues 290 to 310 (GFIKLAIQTGNINLVPVFAFG). Residues 311–418 (EVDCYNVLST…VPDAELKIVG (108 aa)) lie on the Cytoplasmic side of the membrane.

It belongs to the diacylglycerol acyltransferase family.

The protein resides in the lipid droplet. It localises to the endoplasmic reticulum membrane. The catalysed reaction is an acyl-CoA + a 1,2-diacyl-sn-glycerol = a triacyl-sn-glycerol + CoA. The enzyme catalyses a 2-acylglycerol + an acyl-CoA = a 1,2-diacylglycerol + CoA. It carries out the reaction 2-(9Z-octadecenoyl)-glycerol + (9Z)-octadecenoyl-CoA = 1,2-di-(9Z-octadecenoyl)-glycerol + CoA. It functions in the pathway glycerolipid metabolism; triacylglycerol biosynthesis. Functionally, catalyzes the terminal and only committed step in triacylglycerol (TAG) synthesis by using diacylglycerol (DAG) and fatty acyl-CoA as substrates. Required for storage lipid synthesis. Major DAG esterifying enzyme in stationary phase when TAG production is particularly active. Involved in lipid particle synthesis from the endoplasmic reticulum, promoting localized TAG production at discrete ER subdomains, and in ergosterol biosynthesis. Also has monoacylglycerol acyltransferase (MGAT) activity, catalyzing the acyl-CoA-dependent esterification of monoacylglycerol to diacylglycerol. Can also utilize ceramide instead of DAG, acylating the ceramides by attaching a fatty acid to the hydroxy group on the first carbon atom of the long-chain base to produce 1-O-acylceramides. The sequence is that of Diacylglycerol O-acyltransferase 1 (DGA1) from Saccharomyces cerevisiae (strain ATCC 204508 / S288c) (Baker's yeast).